The primary structure comprises 745 residues: TonB-dependent heme receptor A (745 aa).

The first 24 residues, 1 to 24, serve as a signal peptide directing secretion; it reads MNILINKRIFLLVTLVGIQLNVTA. In terms of domain architecture, TBDR plug spans 45–157; that stretch reads DDSNKLPGRS…FAGTVKFETK (113 aa). The region spanning 168–745 is the TBDR beta-barrel domain; the sequence is KIGGFLKYGN…NIKFSLSQKF (578 aa).

Belongs to the TonB-dependent receptor family.

It localises to the cell outer membrane. Its function is as follows. Heme receptor. The polypeptide is TonB-dependent heme receptor A (tdhA) (Haemophilus influenzae (strain 86-028NP)).